Consider the following 224-residue polypeptide: MINCLIVDDDKKLLQYVSSHLERESIQTHTFTSGEASLDFLENKNVDIAIVDIMMSGMDGFELCQTLKDDYHIPVIMLTARDALSDKERAFLSGTDDYVTKPFEVKELLFRIKAVLRRYQINADNELQLGNLILNQSYMEITVGSKTMNLPNKEFQLLFLLASNPKHIFTRDDIIEKIWGFDYEGDDRTVDVHIKRLRQRLSKLKSSVSIQTVRGQGYRVDQNV.

Residues 3 to 116 (NCLIVDDDKK…ELLFRIKAVL (114 aa)) form the Response regulatory domain. Aspartate 52 carries the post-translational modification 4-aspartylphosphate. A DNA-binding region (ompR/PhoB-type) is located at residues 124-222 (DNELQLGNLI…VRGQGYRVDQ (99 aa)).

Post-translationally, phosphorylated by HssS.

Its subcellular location is the cytoplasm. Its function is as follows. Member of the two-component regulatory system HssS/HssR involved in intracellular heme homeostasis and tempering of staphylococcal virulence. Phosphorylated HssR binds to a direct repeat sequence within hrtAB promoter and activates the expression of hrtAB, an efflux pump, in response to extracellular heme, hemin, hemoglobin or blood. This is Heme response regulator HssR (hssR) from Staphylococcus epidermidis (strain ATCC 35984 / DSM 28319 / BCRC 17069 / CCUG 31568 / BM 3577 / RP62A).